Reading from the N-terminus, the 618-residue chain is Medium-chain acyl-CoA ligase ACSF2, mitochondrial (618 aa).

The transit peptide at 1 to 44 directs the protein to the mitochondrion; it reads MRATAAYVGMLRLGRMCAGSPGVLGARAALSRSWQEARLQAVRF. Lys-182 is subject to N6-acetyllysine. Position 185 is an N6-acetyllysine; alternate (Lys-185). Lys-185 carries the post-translational modification N6-succinyllysine; alternate. 266-274 serves as a coordination point for ATP; sequence TSGTTGSPK. An N6-acetyllysine mark is found at Lys-343 and Lys-401. Lys-481 carries the N6-succinyllysine modification. ATP-binding residues include Asp-496 and Arg-511. Lys-513 carries the post-translational modification N6-acetyllysine. Residues Lys-547 and Lys-573 each carry the N6-acetyllysine; alternate modification. Residues Lys-547 and Lys-573 each carry the N6-succinyllysine; alternate modification. ATP is bound at residue Lys-602. Lys-602 is modified (N6-succinyllysine).

This sequence belongs to the ATP-dependent AMP-binding enzyme family.

It is found in the mitochondrion. It catalyses the reaction a medium-chain fatty acid + ATP + CoA = a medium-chain fatty acyl-CoA + AMP + diphosphate. The enzyme catalyses octanoate + ATP + CoA = octanoyl-CoA + AMP + diphosphate. Acyl-CoA synthases catalyze the initial reaction in fatty acid metabolism, by forming a thioester with CoA. Has some preference toward medium-chain substrates. Plays a role in adipocyte differentiation. The sequence is that of Medium-chain acyl-CoA ligase ACSF2, mitochondrial from Macaca fascicularis (Crab-eating macaque).